Consider the following 182-residue polypeptide: Transcription termination/antitermination protein NusG (182 aa).

Belongs to the NusG family.

Its function is as follows. Participates in transcription elongation, termination and antitermination. The chain is Transcription termination/antitermination protein NusG from Chlamydia trachomatis serovar D (strain ATCC VR-885 / DSM 19411 / UW-3/Cx).